The primary structure comprises 851 residues: Molybdenum cofactor sulfurase (851 aa).

K249 is subject to N6-(pyridoxal phosphate)lysine. C413 is a catalytic residue. The 180-residue stretch at Q665–S844 folds into the MOSC domain.

It belongs to the class-V pyridoxal-phosphate-dependent aminotransferase family. MOCOS subfamily. The cofactor is pyridoxal 5'-phosphate.

It catalyses the reaction Mo-molybdopterin + L-cysteine + AH2 = thio-Mo-molybdopterin + L-alanine + A + H2O. It functions in the pathway cofactor biosynthesis; molybdopterin biosynthesis. Sulfurates the molybdenum cofactor. Sulfation of molybdenum is essential for xanthine dehydrogenase (XDH) and aldehyde oxidase (ADO) enzymes in which molybdenum cofactor is liganded by 1 oxygen and 1 sulfur atom in active form. The chain is Molybdenum cofactor sulfurase from Neosartorya fischeri (strain ATCC 1020 / DSM 3700 / CBS 544.65 / FGSC A1164 / JCM 1740 / NRRL 181 / WB 181) (Aspergillus fischerianus).